A 93-amino-acid polypeptide reads, in one-letter code: Large ribosomal subunit protein bL27 (93 aa).

The segment at 1-22 (MAHKKAGGSSRNGRDSEGRRLG) is disordered.

It belongs to the bacterial ribosomal protein bL27 family.

This Methylobacterium sp. (strain 4-46) protein is Large ribosomal subunit protein bL27.